Here is a 539-residue protein sequence, read N- to C-terminus: MKLLAVRRLFRIQRVVIRYRLDDLLFDLPLPWWLRSLRLLMPWRWLPRTPSELSRGARLRLALQDLGPIFIKFGQLLSTRRDLLPTDIADELMLLQDRVPPFDPKQAVALIESQLGAKVGEVFSRFDVEPLASASVAQVHAARLKTGEEVVVKVVRPGLKPVIAQDLAWLFLIAKGAERASADARRLHPVEIVGDYEKTIYDELDLLREAANASQLRRNFEGSELMYVPQVYWDLCRPKVLVMERIYGVPVTDMATLADQRTDMKLLAERGVEVFFTQVFRHSFFHADMHPGNIFVSTVKPWSPQYIAIDCGIVGSLTAEDQDYLARNLIAFFKRDYRRVAELHIDSGWVPAHTKVNEFEAAIRTVCEPIFEKPLKDISFGQVLMRLFQTARRFNMEVQPQLVLLQKTLLNIEGLGRQLYPDLDLWSTAKPFLERWMRERYSPKAMFGNLYSQAEQLPHLAGMTRDLLERLSQPHLHDPQLPERRRQGDRWALRLLGAGLLGGGAVLAASAAEAASLAAPAAWPAWLMLAAGLYLIVRQ.

In terms of domain architecture, Protein kinase spans 125–493 (RFDVEPLASA…RRRQGDRWAL (369 aa)). Residues 131–139 (LASASVAQV) and lysine 153 each bind ATP. The active-site Proton acceptor is aspartate 288. Helical transmembrane passes span 495–515 (LLGA…AEAA) and 517–537 (LAAP…YLIV).

This sequence belongs to the ABC1 family. UbiB subfamily.

Its subcellular location is the cell inner membrane. It participates in cofactor biosynthesis; ubiquinone biosynthesis [regulation]. Its function is as follows. Is probably a protein kinase regulator of UbiI activity which is involved in aerobic coenzyme Q (ubiquinone) biosynthesis. The protein is Probable protein kinase UbiB of Pseudomonas putida (strain W619).